We begin with the raw amino-acid sequence, 321 residues long: Endoglucanase 1 (321 aa).

The first 27 residues, 1-27, serve as a signal peptide directing secretion; the sequence is MSRKLRTLMAALCALPLAFAAAPPAHA. Residue D110 is part of the active site. C112 and C156 are joined by a disulfide. The Proton donor role is filled by D149. The Nucleophile role is filled by D295.

This sequence belongs to the glycosyl hydrolase 6 (cellulase B) family.

The enzyme catalyses Endohydrolysis of (1-&gt;4)-beta-D-glucosidic linkages in cellulose, lichenin and cereal beta-D-glucans.. Implicated in the mechanism of induction exerted by cellobiose. The chain is Endoglucanase 1 (celA1) from Streptomyces halstedii.